The chain runs to 530 residues: MSAKEKFTSLSPAEFFKRNPELAGFPNPARALYQTVRELIENSLDATDVHGILPNIKITIDLIDDARQIYKVNVVDNGIGIPPQEVPNAFGRVLYSSKYVNRQTRGMYGLGVKAAVLYSQMHQDKPIEIETSPVNSKRIYTFKLKIDINKNEPIIVERGSVENTRGFHGTSVAISIPGDWPKAKSRIYEYIKRTYIITPYAEFIFKDPEGNVTYYPRLTNKIPKPPQEVKPHPYGVDREEIKILINNLKRDYTIKEFLVNEFQSIGDTTADKILELAGLKPNKKVKNLTEEEITRLVETFKKYEDFRSPSADSLSVIGEDLIELGLKKIFNPDFAASITRKPKAYQGHPFIVEAGVAFGGSIPVGEEPIVLRYANKIPLIYDEKSDVIWKVVEELDWKRYGIESDQYQMVVMVHLCSTKIPYKSAGKESIAEVEDIEKEIKNALMEVARKLKQYLSEKRKEQEAKKKLLAYLKYIPEVSRSLATFLASGNKELVSKYQNEISEGLFKLISKKLDLINIEEYRKVYRVDSE.

Residues Asn42, Asp76, 96–98 (SSK), 107–113 (MYGLGVK), and Lys427 contribute to the ATP site.

This sequence belongs to the TOP6B family. Homodimer. Heterotetramer of two Top6A and two Top6B chains.

It catalyses the reaction ATP-dependent breakage, passage and rejoining of double-stranded DNA.. Not inhibited by the DNA gyrase inhibitor novobiocin, instead inhibited by eukaryotic topoisomerase inhibitors such as m- and o-amsacrine, ellipticine, and the quinolone CP-115,953. Radicicol inhibits the ATPase activity. Relaxes both positive and negative supercoils and exhibits a strong decatenase and unknotting activity; it cannot introduce DNA supercoils. ATP is absolutely required for DNA cleavage; the nonhydrolyzable analog AMP-PNP generates nicked or linear products from a supercoiled dsDNA substrate. Generates staggered two-nucleotide long 5' overhangs. The enzyme is covalently attached transiently to the 5'-ends of the cleaved strands. The polypeptide is Type 2 DNA topoisomerase 6 subunit B (Saccharolobus shibatae (strain ATCC 51178 / DSM 5389 / JCM 8931 / NBRC 15437 / B12) (Sulfolobus shibatae)).